The sequence spans 510 residues: Global transcription regulator sge1 (510 aa).

Disordered regions lie at residues 94-152, 393-438, and 469-510; these read PPGE…ASRN, HPFM…QQHS, and LGGT…MGRL. Residues 123–143 are compositionally biased toward low complexity; that stretch reads NTGMNGTATGANAANLSSAGS. Composition is skewed to polar residues over residues 471–480 and 501–510; these read GTNTDQSQPF and PGSNNSMGRL.

It belongs to the MIT1/WOR1 family.

The protein resides in the nucleus. Functionally, global transcriptional regulator of pathogenicity. Differentially regulates expression of effector genes. Also required for radial growth and production of asexual conidiospores, and plays a role in mycelium pigmentation. Not required for induction of Ave1, the effector that activates resistance mediated by the Ve1 immune receptor in tomato. This Verticillium dahliae (strain VdLs.17 / ATCC MYA-4575 / FGSC 10137) (Verticillium wilt) protein is Global transcription regulator sge1.